Here is a 579-residue protein sequence, read N- to C-terminus: Copine-E (579 aa).

C2 domains follow at residues 45–175 (IDPS…KVIG) and 183–304 (QTGT…EFTL). The Ca(2+) site is built by Asp-80, Asp-86, Asp-145, Asp-147, and Asp-153. A VWFA domain is found at 345-552 (NLMIAIDCTA…KKYENDPEQL (208 aa)).

It belongs to the copine family. Ca(2+) serves as cofactor.

This chain is Copine-E (cpnE), found in Dictyostelium discoideum (Social amoeba).